A 376-amino-acid chain; its full sequence is MIRTNFLLKQGRRHESKDKSSKRHKSEEHNDKEHSSDKGRERLNSSENGEDRHKRKERKSSRGRSHSRSRSRERRHRSRSRERKKSRSRSRDRKKSRSRSRDRKKSRSRSRDRKRRIRTRSRSRSRHRHRTRSRSRSRSRSRDRKKRIEKPRRFSRSLSRTPSPPPFRGRNTAMDAQEALARRLERAKKLQEQREKEMVEKQKQQEMAAAAAATGGSVLNVAALLASGTQVTPQIAMAAQMAALQAKALAETGIAVPSYYNPAAVNPMKFAEQEKKRKMLWQGKKEGDKSQSAEIWEKLNFGNKDQNVKFRKLMGIKSEDEAGCSSVDEESYKTLKQQEEVFRNLDAQYEMARSQTHTQRGMGLGFTSSMRGMDTV.

The disordered stretch occupies residues 1–171 (MIRTNFLLKQ…PSPPPFRGRN (171 aa)). The segment covering 13 to 52 (RHESKDKSSKRHKSEEHNDKEHSSDKGRERLNSSENGEDR) has biased composition (basic and acidic residues). Ser45 bears the Phosphoserine mark. The span at 53 to 155 (HKRKERKSSR…KRIEKPRRFS (103 aa)) shows a compositional bias: basic residues. Residues 171-214 (NTAMDAQEALARRLERAKKLQEQREKEMVEKQKQQEMAAAAAAT) adopt a coiled-coil conformation. Lys317 participates in a covalent cross-link: Glycyl lysine isopeptide (Lys-Gly) (interchain with G-Cter in SUMO1); alternate. Lys317 is covalently cross-linked (Glycyl lysine isopeptide (Lys-Gly) (interchain with G-Cter in SUMO2); alternate). Residue Ser318 is modified to Phosphoserine.

The protein belongs to the RSRC2 family.

The sequence is that of Arginine/serine-rich coiled-coil protein 2 (Rsrc2) from Mus musculus (Mouse).